The chain runs to 134 residues: Probable thionin-2.4 (134 aa).

The signal sequence occupies residues 1–24 (MEGKTLIVSVLIMSLFMAQNQVDA). 3 disulfide bridges follow: cysteine 27/cysteine 64, cysteine 28/cysteine 56, and cysteine 40/cysteine 50. A propeptide spans 71–134 (DILENTGDAV…KGSMNAVENA (64 aa)) (acidic domain).

It belongs to the plant thionin (TC 1.C.44) family.

It is found in the secreted. Functionally, thionins are small plant proteins which are toxic to animal cells. They seem to exert their toxic effect at the level of the cell membrane. Their precise function is not known. The protein is Probable thionin-2.4 of Arabidopsis thaliana (Mouse-ear cress).